We begin with the raw amino-acid sequence, 263 residues long: HTH-type transcriptional repressor NanR (263 aa).

A disordered region spans residues 1 to 25 (MDVMNAFDSQAEDSPTSLGRSLRRR). Residues 30–98 (KKLSEMVEEE…NGERARVSRP (69 aa)) enclose the HTH gntR-type domain. Positions 58–77 (ERELMAFFNVGRPSVREALA) form a DNA-binding region, H-T-H motif.

The protein belongs to the NanR family.

Functionally, transcriptional repressor that controls expression of the genes required for the catabolism of sialic acids. This is HTH-type transcriptional repressor NanR from Salmonella choleraesuis (strain SC-B67).